The chain runs to 282 residues: Formamidopyrimidine-DNA glycosylase (282 aa).

The active-site Schiff-base intermediate with DNA is the P2. E3 serves as the catalytic Proton donor. K61 functions as the Proton donor; for beta-elimination activity in the catalytic mechanism. Residues H93, R112, and K158 each coordinate DNA. The segment at 244 to 278 (DAYGREGEGCRRCGAVMHREKFMNRSSFYCPRCQP) adopts an FPG-type zinc-finger fold. The active-site Proton donor; for delta-elimination activity is the R268.

The protein belongs to the FPG family. As to quaternary structure, monomer. It depends on Zn(2+) as a cofactor.

The enzyme catalyses Hydrolysis of DNA containing ring-opened 7-methylguanine residues, releasing 2,6-diamino-4-hydroxy-5-(N-methyl)formamidopyrimidine.. It catalyses the reaction 2'-deoxyribonucleotide-(2'-deoxyribose 5'-phosphate)-2'-deoxyribonucleotide-DNA = a 3'-end 2'-deoxyribonucleotide-(2,3-dehydro-2,3-deoxyribose 5'-phosphate)-DNA + a 5'-end 5'-phospho-2'-deoxyribonucleoside-DNA + H(+). Functionally, involved in base excision repair of DNA damaged by oxidation or by mutagenic agents. Acts as a DNA glycosylase that recognizes and removes damaged bases. Has a preference for oxidized purines, such as 7,8-dihydro-8-oxoguanine (8-oxoG). Has AP (apurinic/apyrimidinic) lyase activity and introduces nicks in the DNA strand. Cleaves the DNA backbone by beta-delta elimination to generate a single-strand break at the site of the removed base with both 3'- and 5'-phosphates. This chain is Formamidopyrimidine-DNA glycosylase, found in Mycobacterium leprae (strain Br4923).